We begin with the raw amino-acid sequence, 1387 residues long: Kinesin-like protein KIF15 (1387 aa).

Residues 1–23 (MAPGCKSELRNVTNSHSNQPSNE) are disordered. Positions 10–22 (RNVTNSHSNQPSN) are enriched in polar residues. Positions 26 to 363 (AIKVFVRIRP…LNFAQRAKLI (338 aa)) constitute a Kinesin motor domain. 109 to 116 (GQTGSGKT) serves as a coordination point for ATP. Residues 368–1132 (VVNEDTQGNV…LKMRQLEHVM (765 aa)) are a coiled coil. At Ser568 the chain carries Phosphoserine. Lys1009 bears the N6-acetyllysine mark. Phosphoserine is present on residues Ser1141 and Ser1169.

Belongs to the TRAFAC class myosin-kinesin ATPase superfamily. Kinesin family. KLP2 subfamily. As to quaternary structure, interacts with MKI67 and TPX2. In terms of tissue distribution, expressed in brain (neurons in the external germinal layer of the cerebellum and in ventricular zones) (at protein level). Expressed in spleen and testis.

The protein resides in the cytoplasm. It is found in the cytoskeleton. Its subcellular location is the spindle. Functionally, plus-end directed kinesin-like motor enzyme involved in mitotic spindle assembly. This chain is Kinesin-like protein KIF15 (Kif15), found in Mus musculus (Mouse).